The primary structure comprises 670 residues: Transcription factor 4 (670 aa).

Residues 1–83 (MHHQQRMAAL…GTPYDHMTSR (83 aa)) are essential for MYOD1 inhibition. Disordered regions lie at residues 24 to 244 (AMFS…LGNS), 262 to 320 (LSYP…SQTG), 335 to 378 (HTNN…EGPL), 406 to 426 (PSTAVPGGHGDMHGIMGPSHN), 465 to 573 (SLLP…MANN), and 637 to 670 (KRREEEKVSSEPPPLSLAGPHPGMGDAANHMGQM). The segment covering 29–49 (PVSSGKNGPTSLASGHFTGSN) has biased composition (polar residues). 3 positions are modified to phosphoserine: Ser-66, Ser-87, and Ser-92. 4 stretches are compositionally biased toward polar residues: residues 107–125 (GSYSSYGRENVQGCHQQSL), 136–154 (GTLSPTKPGSQYYQYSSNN), 205–215 (PAASTFPSSFF), and 265–305 (PSHS…TDSI). Residues 336 to 347 (TNNSFSSNPSTP) are compositionally biased toward low complexity. Over residues 364–373 (NGGQASSSPN) the composition is skewed to polar residues. A Phosphoserine modification is found at Ser-371. The interval 378-399 (LHSLQSRIEDRLERLDDAIHVL) is leucine-zipper. Low complexity-rich tracts occupy residues 466 to 479 (LLPNQVPVPQLPVQ) and 502 to 511 (GQSVSSGSSE). Ser-514 bears the Phosphoserine mark. Basic and acidic residues-rich tracts occupy residues 526–542 (KSSEDKKLDDDKKDIKS) and 558–573 (PEQKAEREKERRMANN). The bHLH domain maps to 567-620 (ERRMANNARERLRVRDINEAFKELGRMVQLHLKSDKPQTKLLILHQAVAVILSL). The class A specific domain stretch occupies residues 622-645 (QQVRERNLNPKAACLKRREEEKVS).

Efficient DNA binding requires dimerization with another bHLH protein. Isoform 2 seems to form inactive heterodimers with MYOD1. Interacts with HIVEP2. Interacts with NEUROD2. Interacts with AGBL1. Interacts with BHLHA9. In terms of tissue distribution, expressed in the cerebral cortex, Purkinje and granule cell layers of the cerebellum, olfactory neuroepithelium, pyramidal cells of hippocampal layers CA1-CA4, and in the granular cells of the dentate gyrus.

It localises to the nucleus. Its function is as follows. Transcription factor that binds to the immunoglobulin enhancer Mu-E5/KE5-motif. Involved in the initiation of neuronal differentiation. Activates transcription by binding to the E box (5'-CANNTG-3'). Isoform 2 inhibits MYOD1 activation of the cardiac alpha-actin promoter. Binds to the E-box present in the somatostatin receptor 2 initiator element (SSTR2-INR) to activate transcription. May have a regulatory function in developmental processes as well as during neuronal plasticity. In Mus musculus (Mouse), this protein is Transcription factor 4 (Tcf4).